A 185-amino-acid chain; its full sequence is MINEIKNDAKDRMAKSVESLKTQMSKIRTGRAHPSLLDGIQVEYYGAATPLKQLANVVAEDARTLSISIFDRSMIQAVEKAILTSDLGLNPSSNGQTLRVPLPPLTEERRRDLTKIVRAEAEGARVAVRNIRRDANADLKALLKDKEISEDDDRRAQEEIQKLTDSFIKLVDEALALKEKELMEI.

Belongs to the RRF family.

The protein resides in the cytoplasm. Functionally, responsible for the release of ribosomes from messenger RNA at the termination of protein biosynthesis. May increase the efficiency of translation by recycling ribosomes from one round of translation to another. In Aeromonas hydrophila subsp. hydrophila (strain ATCC 7966 / DSM 30187 / BCRC 13018 / CCUG 14551 / JCM 1027 / KCTC 2358 / NCIMB 9240 / NCTC 8049), this protein is Ribosome-recycling factor.